A 635-amino-acid polypeptide reads, in one-letter code: Probable serine/threonine-protein kinase DDB_G0270146 (635 aa).

One can recognise a Protein kinase domain in the interval Val-77–Ile-329. ATP contacts are provided by residues Ile-83 to Val-91 and Lys-106. The Proton acceptor role is filled by Asp-199. Low complexity predominate over residues Ser-360–Asp-392. The tract at residues Ser-360–Val-405 is disordered. Coiled coils occupy residues Ile-417–Glu-456 and Lys-536–Ser-585. Basic and acidic residues predominate over residues Glu-540–Lys-582. A disordered region spans residues Glu-540–Glu-635. Low complexity predominate over residues Asp-583–Pro-598. A compositionally biased stretch (polar residues) spans Gly-626–Glu-635.

The protein belongs to the protein kinase superfamily. STE Ser/Thr protein kinase family. Mg(2+) serves as cofactor.

It carries out the reaction L-seryl-[protein] + ATP = O-phospho-L-seryl-[protein] + ADP + H(+). The catalysed reaction is L-threonyl-[protein] + ATP = O-phospho-L-threonyl-[protein] + ADP + H(+). The protein is Probable serine/threonine-protein kinase DDB_G0270146 of Dictyostelium discoideum (Social amoeba).